The primary structure comprises 618 residues: 1-deoxy-D-xylulose-5-phosphate synthase (618 aa).

Thiamine diphosphate contacts are provided by residues His-70 and 111-113 (GHS). Asp-142 is a Mg(2+) binding site. Thiamine diphosphate is bound by residues 143–144 (GS), Asn-171, Tyr-278, and Glu-360. Asn-171 is a Mg(2+) binding site.

The protein belongs to the transketolase family. DXPS subfamily. In terms of assembly, homodimer. It depends on Mg(2+) as a cofactor. Requires thiamine diphosphate as cofactor.

It catalyses the reaction D-glyceraldehyde 3-phosphate + pyruvate + H(+) = 1-deoxy-D-xylulose 5-phosphate + CO2. The protein operates within metabolic intermediate biosynthesis; 1-deoxy-D-xylulose 5-phosphate biosynthesis; 1-deoxy-D-xylulose 5-phosphate from D-glyceraldehyde 3-phosphate and pyruvate: step 1/1. Catalyzes the acyloin condensation reaction between C atoms 2 and 3 of pyruvate and glyceraldehyde 3-phosphate to yield 1-deoxy-D-xylulose-5-phosphate (DXP). The protein is 1-deoxy-D-xylulose-5-phosphate synthase of Helicobacter pylori (strain ATCC 700392 / 26695) (Campylobacter pylori).